We begin with the raw amino-acid sequence, 111 residues long: Nucleoid-associated protein LBA0378 (111 aa).

The protein belongs to the YbaB/EbfC family. In terms of assembly, homodimer.

It is found in the cytoplasm. The protein resides in the nucleoid. In terms of biological role, binds to DNA and alters its conformation. May be involved in regulation of gene expression, nucleoid organization and DNA protection. This chain is Nucleoid-associated protein LBA0378, found in Lactobacillus acidophilus (strain ATCC 700396 / NCK56 / N2 / NCFM).